Consider the following 2999-residue polypeptide: TPR and ankyrin repeat-containing protein 1 (2999 aa).

The tract at residues 1–87 is disordered; sequence MASTTAGRRW…QPRGSTDSAC (87 aa). Residues 19–36 show a composition bias toward low complexity; it reads RGPTPRSRAPGAKLSAPE. TPR repeat units follow at residues 144 to 177 and 179 to 211; these read AMLL…DPTY and KGYY…LQRS. 6 ANK repeats span residues 297–327, 328–361, 369–405, 538–567, 572–593, and 621–654; these read EKYV…NIET, IGPN…EWKE, AGCT…DPTL, SQDR…DPRS, EGDT…DIGF, and NGNT…NFNL. Disordered regions lie at residues 684-722, 773-831, 1151-1211, and 1318-1344; these read RRKN…LPCG, MPLP…GASQ, LEVE…GCVP, and WEED…QTGD. Composition is skewed to polar residues over residues 699–717 and 801–815; these read SRSS…TSFK and TQRM…NNPV. A compositionally biased stretch (basic and acidic residues) spans 1151–1164; sequence LEVEPGKEGPGREE. Positions 1318–1327 are enriched in acidic residues; that stretch reads WEEDDEEVEA. 2 TPR repeats span residues 1772–1805 and 1866–1899; these read PYEW…EKEK and LGKI…DLAL.

In terms of tissue distribution, expressed only in the brain. Detected in the hippocampus, hypothalamus and cingulate gyrus.

In Mus musculus (Mouse), this protein is TPR and ankyrin repeat-containing protein 1 (Trank1).